The chain runs to 223 residues: MSTSPLVIAIDGPSGSGKSSTSRGVANRLGLARLDTGSMYRAVACRVAHLGIDPTTNPRDAIKVAQSCHLEIDTSAIDDRVVIDGEDVTKEIRDPQTSAKVSAVATIQPVRDALTARMRQVAADRGRIVMEGRDITTVVCPDAQVRVLLVADPAIRVARRQAELGEKVDMAQVIDSIVRRDRDDSTVSTFEEPAEGVTVVDSTHLNLDQVIDAVIDLVPVTLR.

Residues 1–23 form a disordered region; it reads MSTSPLVIAIDGPSGSGKSSTSR. Residue 12 to 20 participates in ATP binding; sequence GPSGSGKSS.

This sequence belongs to the cytidylate kinase family. Type 1 subfamily.

It is found in the cytoplasm. It catalyses the reaction CMP + ATP = CDP + ADP. It carries out the reaction dCMP + ATP = dCDP + ADP. The polypeptide is Cytidylate kinase (Cutibacterium acnes (strain DSM 16379 / KPA171202) (Propionibacterium acnes)).